A 430-amino-acid polypeptide reads, in one-letter code: MEFVLESISPTKKKLTISLTPDEVNTALDSVIAQYKKDLSLPGFRKGKVPNSVVFKKFSEEITNKATEETLKIYIKEIFQKEHIKPLCNLLTEDTDFIRNESFSSTLTFEVLPEITFPNYEGLEVHQDVVKVTDEEVAELLKNIQLAMAELVDVKEDRSPQNGDVVDVDYKGFENGSPVTDVSGEHFVLTLGQRQALEDFEQLVKTAKVGEEKVGIVNFPRDYAHKGLAGKSIDFHIKLNSIKTSILPELDADFAKKAGYEDIDKLREAAKVQLEIKKKQNAKSNAMKKLINGLLEQVTFDVPETMLETRIERILGDHNIRSQQTVQVQTGEERSESEEELYNNAKVEALAVLRPQIFLMALAEKEKLVVMEQEVERALYNMAIRARQDYNKFRDAYYRSGLVYELQDHLLAEKAMELIYNKANVVEVEQ.

A PPIase FKBP-type domain is found at 163–248; sequence GDVVDVDYKG…LNSIKTSILP (86 aa).

It belongs to the FKBP-type PPIase family. Tig subfamily.

Its subcellular location is the cytoplasm. It catalyses the reaction [protein]-peptidylproline (omega=180) = [protein]-peptidylproline (omega=0). Functionally, involved in protein export. Acts as a chaperone by maintaining the newly synthesized protein in an open conformation. Functions as a peptidyl-prolyl cis-trans isomerase. This Lawsonia intracellularis (strain PHE/MN1-00) protein is Trigger factor.